Here is a 906-residue protein sequence, read N- to C-terminus: MSKLRWLIMAFLVCLLLLTPKDLEGLQLVGAIRNHLFWSTSSPLHHLPDLLEEESVQVNEMELWGDDDGRRRMMGEEVRRQAGAGRMSEVKMGGDRPLVAVIKKEKHGAKKKKDDDSSGMVVVGLSAACVALVTLVGICFCACRDSESSSSPYDLRDEKPLLSLNLSDGPSRKSCATTIDVSRLGALTAECEQHLHGGAGAGDHNTTNYNLRKPAGVGSMSMNKVSMQSQAMRMSSHEITTIAGAGRVENKVSTIAPSAAAAAVASAGGGQVPAAPPPPAGPPPPAPPPLPPSHHHHHGHHPPPPHPLPPGAGAGAGTGAPPPPPAHPAAPAPPPPAPSPSAAGAGSGPPPPPPPAAPAAPRPPGPGPGPPPPPGAAGRGGGGPPPPALPGGPRARGPPPFKKSPGAAAAAAQADPNKAKLKPFFWDKVTANPNQAMVWDQIKAGSFQFNEEMIESLFGAQSTEKKSTDAKKESGKEATQFVRILDPKKAQNLAISLKALSVSAEQVRAAVMEGHDLPPDLIQTLVRWSPTSDEELRLRLYAGEPAQLGPAEQFMRAIIDVPYLYQRLDALLFMAALPEEAAAVEQSFATLEVACEELRGSRLFKKLLEAVLKTGNRMNDGTFRGGAQAFKLDTLLKLADVKGVDGKTTLLHFVVQEIIRSEGVRAARAASGGGGGSSISSISSSDDLILLQSQSSIGSNSGRSSVDASSLEQEQDETERYRQLGLGVVSSLGDDLQNVRKAASFDADALTITVASLGHRLVKANEFLSTGMRSLEEDSGFQRRLASFVQQSQEQVTRLLEDEKRLRSLVRATVDYFHGSTGKDEGLRLFVVVRDFLGILDKVCREVKEQAAANAKAKKQQQPTPAPRSRQSSQSSFRDPRQQIQDRRAAALSRNNSSSSSSDSDD.

A signal peptide spans 1–25 (MSKLRWLIMAFLVCLLLLTPKDLEG). The chain crosses the membrane as a helical span at residues 120 to 140 (MVVVGLSAACVALVTLVGICF). Disordered regions lie at residues 267–416 (AGGG…QADP) and 854–906 (NAKA…DSDD). Pro residues predominate over residues 274–292 (AAPPPPAGPPPPAPPPLPP). Positions 293 to 303 (SHHHHHGHHPP) are enriched in basic residues. 3 stretches are compositionally biased toward pro residues: residues 320-339 (APPP…PAPS), 348-375 (GPPP…PPPG), and 383-402 (GPPP…PPFK). Composition is skewed to low complexity over residues 403–416 (KSPG…QADP) and 854–877 (NAKA…QSSF). The FH2 domain maps to 411-866 (AAQADPNKAK…AKKQQQPTPA (456 aa)). Over residues 878 to 889 (RDPRQQIQDRRA) the composition is skewed to basic and acidic residues. Residues 897-906 (SSSSSSDSDD) are compositionally biased toward low complexity.

This sequence belongs to the formin-like family. Class-I subfamily.

Its subcellular location is the membrane. This chain is Formin-like protein 18 (FH18), found in Oryza sativa subsp. japonica (Rice).